We begin with the raw amino-acid sequence, 427 residues long: Serine--tRNA ligase (427 aa).

231 to 233 (TAE) provides a ligand contact to L-serine. ATP is bound at residue 262-264 (RSE). Glu285 provides a ligand contact to L-serine. 349-352 (EISS) serves as a coordination point for ATP. Ser385 lines the L-serine pocket.

It belongs to the class-II aminoacyl-tRNA synthetase family. Type-1 seryl-tRNA synthetase subfamily. Homodimer. The tRNA molecule binds across the dimer.

It localises to the cytoplasm. It catalyses the reaction tRNA(Ser) + L-serine + ATP = L-seryl-tRNA(Ser) + AMP + diphosphate + H(+). The enzyme catalyses tRNA(Sec) + L-serine + ATP = L-seryl-tRNA(Sec) + AMP + diphosphate + H(+). It participates in aminoacyl-tRNA biosynthesis; selenocysteinyl-tRNA(Sec) biosynthesis; L-seryl-tRNA(Sec) from L-serine and tRNA(Sec): step 1/1. Catalyzes the attachment of serine to tRNA(Ser). Is also able to aminoacylate tRNA(Sec) with serine, to form the misacylated tRNA L-seryl-tRNA(Sec), which will be further converted into selenocysteinyl-tRNA(Sec). The chain is Serine--tRNA ligase from Listeria monocytogenes serotype 4b (strain CLIP80459).